Consider the following 33-residue polypeptide: Imperacalcin (33 aa).

Intrachain disulfides connect Cys-3–Cys-17, Cys-10–Cys-21, and Cys-16–Cys-32. Important for stimulation of [3H]ryanodine binding to RYR1 regions lie at residues Lys-8–Arg-9 and Lys-19–Lys-20. Residues Lys-22–Arg-24 form an essential for stimulation of [3H]ryanodine binding to RYR1 region. Residues Gly-25–Asn-27 are important for stimulation of [3H]ryanodine binding to RYR1.

It belongs to the scorpion calcin family. In terms of tissue distribution, expressed by the venom gland.

It localises to the secreted. Functionally, this toxin affects the activity of ryanodine receptors 1, 2 and 3 (RyR1, RyR2 and RyR3). At lower concentrations the toxin increases full openings of the RyRs, and at higher concentrations it inhibits full openings and induces openings to subconductance levels (30% of the full conductance state) and reduces the number of full conductance openings. The different actions may be attributed to the toxins binding at different sites on the RyRs, with binding at a high-affinity site mediating the increase in full openings and the induction of subconductance states evoked upon binding to a lower-affinity site. Furthermore, it triggers calcium release from sarcoplasmic vesicles (11.7 nM are enough to induce a sharp release, and 70% of the total calcium is released after toxin (100 nM) addition) probably by acting as a cell-penetrating peptide (CPP). In addition, it has been shown to dose-dependently stimulate ryanodine binding to RyR1 (EC(50)=8.7 nM). It also augments the bell-shaped calcium-[3H]ryanodine binding curve that is maximal at about 10 uM calcium concentration. It binds a different site as ryanodine. It acts synergistically with caffeine. In vivo, intracerebroventricular injection into mice induces neurotoxic symptoms, followed by death. The chain is Imperacalcin from Pandinus imperator (Emperor scorpion).